A 602-amino-acid chain; its full sequence is MKTKAPMKNIRNFSIIAHIDHGKSTLADCLISECNAISNREMKSQVMDTMDIEKERGITIKAQSVRLNYTFKGEDYVLNLIDTPGHVDFSYEVSRSLCSCEGALLVVDATQGVEAQTIANVYIALDNNLEILPVINKIDLPNANVLEVKQDIEDTIGIDCFSANEVSAKAKLGIKDLLEKIITTIPAPSGDFNAPLKALIYDSWFDNYLGALALVRIMDGSINTEQEILVMGTGKKHGVLGLYYPNPLKKIPTKSLECGEIGIVSLGLKSVTDIAVGDTLTDAKNPTPKPIEGFMPAKPFVFAGLYPIETDRFEDLREALLKLQLNDCALNFEPESSVALGFGFRVGFLGLLHMEVIKERLEREFSLNLIATAPTVVYEVHLTDNSVKYVQNPSELPPENHIACIKEPFVRATIITPSEFLGNLMQLLNNKRGIQEKMEYLNQSRVMLTYSLPSNEIVMDFYDKLKSCTKGYASFDYEPIENREAHLVKLDVRVAGDVVDALSIIIDKNKAYEKGRALVETMKELIPRQLFEVAIQASVGNKIIARETIKSVGKNVTAKCYGGDITRKRKLLEKQKEGKKRMKAIGKVELPQEAFLAILKID.

The region spanning lysine 8–serine 189 is the tr-type G domain. GTP-binding positions include aspartate 20 to threonine 25 and asparagine 136 to aspartate 139.

Belongs to the TRAFAC class translation factor GTPase superfamily. Classic translation factor GTPase family. LepA subfamily.

The protein localises to the cell inner membrane. The catalysed reaction is GTP + H2O = GDP + phosphate + H(+). In terms of biological role, required for accurate and efficient protein synthesis under certain stress conditions. May act as a fidelity factor of the translation reaction, by catalyzing a one-codon backward translocation of tRNAs on improperly translocated ribosomes. Back-translocation proceeds from a post-translocation (POST) complex to a pre-translocation (PRE) complex, thus giving elongation factor G a second chance to translocate the tRNAs correctly. Binds to ribosomes in a GTP-dependent manner. The protein is Elongation factor 4 of Helicobacter pylori (strain G27).